The chain runs to 565 residues: Carboxylesterase 1D (565 aa).

The first 18 residues, 1–18 (MGLYPLIWLSLAACTAWG), serve as a signal peptide directing secretion. A glycan (N-linked (GlcNAc...) asparagine) is linked at Asn-79. Cys-87 and Cys-116 form a disulfide bridge. Catalysis depends on Ser-221, which acts as the Acyl-ester intermediate. Cys-273 and Cys-284 are joined by a disulfide. Glu-353 (charge relay system) is an active-site residue. The residue at position 382 (Lys-382) is an N6-succinyllysine. The Charge relay system role is filled by His-466. Asn-489 is a glycosylation site (N-linked (GlcNAc...) asparagine). Positions 562–565 (HVEL) match the Prevents secretion from ER motif.

Belongs to the type-B carboxylesterase/lipase family. Homotrimer. As to expression, highest expression occurs in liver with lower levels in adipose tissue, kidney, heart, intestine, lung, testis and thymus.

Its subcellular location is the endoplasmic reticulum lumen. The protein resides in the cytoplasm. It localises to the cytosol. The protein localises to the lipid droplet. It is found in the microsome. The catalysed reaction is a carboxylic ester + H2O = an alcohol + a carboxylate + H(+). It catalyses the reaction a long-chain fatty acyl ethyl ester + H2O = a long-chain fatty acid + ethanol + H(+). It carries out the reaction all-trans-retinyl hexadecanoate + H2O = all-trans-retinol + hexadecanoate + H(+). Its function is as follows. Major lipase in white adipose tissue. Involved in the metabolism of xenobiotics and of natural substrates. Hydrolyzes triacylglycerols and monoacylglycerols, with a preference for monoacylglycerols. The susceptibility of the substrate increases with decreasing acyl chain length of the fatty acid moiety. Catalyzes the synthesis of fatty acid ethyl esters. Hydrolyzes retinyl esters. The polypeptide is Carboxylesterase 1D (Mus musculus (Mouse)).